Here is a 494-residue protein sequence, read N- to C-terminus: MSTGTFIVSQPLNYRGGARVDPVDASGTEKAFEPATGRVIATFTCSGEKEVNLAVQDAKAAFKIWSQKSGMERCRILLEAARIIRERKEEIATMETINNGKSIFEARLDVDISWQCLEYYAGLAGSMAGEHIQLPGGSFGYTRREPLGVCVGIGAWNYPFQIACWKSAPALACGNAMIFKPSPFTPLSVLLLAEIYTEAGVPPGLFNVVQGGATTGQLLCQHRDVAKISFTGSVPTGSKIMEMSAKGIKPVTLELGGKSPLIIFSDCDMGNAVKGALMANFLTQGEVCCNGTRVFVQKEILDKFTEEVVKQTQRIKIGDPLLEDTRMGPLINRPHLERILGFVKVAKEQGAKVLCGGDLYVPEDPKLKEGYYMRPCVLTNCRDDMTCVKEEIFGPVMSILSFDTEAEVVERANDTTFGLAAGVFTRDIQRAHRVVAELQAGMCFINNYNVSPVELPFGGYKKSGFGRENGRVTIEYYSQLKTVCVEMGDVESVF.

Ser-2 carries the post-translational modification N-acetylserine. N6-acetyllysine; alternate is present on Lys-30. An N6-succinyllysine; alternate modification is found at Lys-30. Position 59 is an N6-succinyllysine (Lys-59). NAD(+)-binding positions include Lys-180 and 232–236 (GSVPT). Glu-254 acts as the Proton acceptor in catalysis. Cys-288 (nucleophile) is an active-site residue. Position 298 is an N6-acetyllysine (Lys-298). Lys-303 is modified (N6-acetyllysine; alternate). Lys-303 carries the post-translational modification N6-succinyllysine; alternate. Lys-344 is subject to N6-acetyllysine. Glu-391 provides a ligand contact to NAD(+).

Belongs to the aldehyde dehydrogenase family. In terms of assembly, homotetramer.

Its subcellular location is the cytoplasm. It is found in the cytosol. The catalysed reaction is 4-(trimethylamino)butanal + NAD(+) + H2O = 4-(trimethylamino)butanoate + NADH + 2 H(+). It catalyses the reaction an aldehyde + NAD(+) + H2O = a carboxylate + NADH + 2 H(+). It carries out the reaction 4-aminobutanal + NAD(+) + H2O = 4-aminobutanoate + NADH + 2 H(+). The enzyme catalyses formaldehyde + NAD(+) + H2O = formate + NADH + 2 H(+). The catalysed reaction is acetaldehyde + NAD(+) + H2O = acetate + NADH + 2 H(+). It catalyses the reaction imidazole-4-acetaldehyde + NAD(+) + H2O = imidazole-4-acetate + NADH + 2 H(+). It carries out the reaction acrolein + NAD(+) + H2O = acrylate + NADH + 2 H(+). The enzyme catalyses (5-hydroxyindol-3-yl)acetaldehyde + NAD(+) + H2O = (5-hydroxyindol-3-yl)acetate + NADH + 2 H(+). The catalysed reaction is 3,4-dihydroxyphenylacetaldehyde + NAD(+) + H2O = 3,4-dihydroxyphenylacetate + NADH + 2 H(+). It catalyses the reaction spermine monoaldehyde + NAD(+) + H2O = N-(2-carboxyethyl)spermidine + NADH + 2 H(+). It carries out the reaction propanal + NAD(+) + H2O = propanoate + NADH + 2 H(+). The enzyme catalyses butanal + NAD(+) + H2O = butanoate + NADH + 2 H(+). The catalysed reaction is pentanal + NAD(+) + H2O = pentanoate + NADH + 2 H(+). It catalyses the reaction hexanal + NAD(+) + H2O = hexanoate + NADH + 2 H(+). It participates in amine and polyamine biosynthesis; carnitine biosynthesis. Functionally, converts gamma-trimethylaminobutyraldehyde into gamma-butyrobetaine with high efficiency (in vitro). Can catalyze the irreversible oxidation of a broad range of aldehydes to the corresponding acids in an NAD-dependent reaction, but with low efficiency. Catalyzes the oxidation of aldehydes arising from biogenic amines and polyamines. The sequence is that of 4-trimethylaminobutyraldehyde dehydrogenase (ALDH9A1) from Sus scrofa (Pig).